A 354-amino-acid polypeptide reads, in one-letter code: Glycerol-1-phosphate dehydrogenase [NAD(P)+] (354 aa).

Residues 103 to 107 and 125 to 128 contribute to the NAD(+) site; these read GRAVD and TAAS. A substrate-binding site is contributed by aspartate 130. Position 134 (serine 134) interacts with NAD(+). Aspartate 176 is a binding site for substrate. The Zn(2+) site is built by aspartate 176 and histidine 255. Histidine 259 is a binding site for substrate. Histidine 271 is a binding site for Zn(2+).

Belongs to the glycerol-1-phosphate dehydrogenase family. As to quaternary structure, homodimer. The cofactor is Zn(2+).

The protein localises to the cytoplasm. It carries out the reaction sn-glycerol 1-phosphate + NAD(+) = dihydroxyacetone phosphate + NADH + H(+). It catalyses the reaction sn-glycerol 1-phosphate + NADP(+) = dihydroxyacetone phosphate + NADPH + H(+). It functions in the pathway membrane lipid metabolism; glycerophospholipid metabolism. In terms of biological role, catalyzes the NAD(P)H-dependent reduction of dihydroxyacetonephosphate (DHAP or glycerone phosphate) to glycerol 1-phosphate (G1P). The G1P thus generated is used as the glycerophosphate backbone of phospholipids in the cellular membranes of Archaea. This chain is Glycerol-1-phosphate dehydrogenase [NAD(P)+], found in Cenarchaeum symbiosum (strain A).